Consider the following 1093-residue polypeptide: MNAERNGSSTDTLDEYFEYEAEEFLVSLALLITEGRTPEHSIKGRTEGFHCPPAQSSQPPTTKHECSDKLAQCRQARRTRSEVMLLWKNNIPIMVEVMLLPDCCYSDEGPNTEGNDLNDPAIKQDALLLERWILEPVPRQSGDRFIEEKTLLLAVRSFVFFSQLSAWLSVSHGAVPRNILYRVSAADVDLQWTFSQTPTEHVFPVPNVSHNVALKVSVQSLPRQSNYPVLTCSIHTNLSYYEKQMKERKLHQHSESSTAELCGTSSPQRVCGKQAWTVIPEGLLNVKKTPEFTSSIRNLKLYPSTGLGSDFAASQSKIQCYNAAADSKTQSHETAVRTFKSLSLVDSRVSNGHCSHQSTGETNPLIGSLLQERQEVIARIAQHLIHCDPATSPVVAGRPFNMRETSTPTPKAYRSTYEDESLLRKGKETSPVPTVNLDNAIQEDGGEGKTRAIPEMPRLNPRAPVNHCGRPSAGEGNPLIDSLLQERRDVIARIAQHLIHCDPATSHVNGRPFKIHETSPVSSKIFRSTYEDENLLKKVKQPSSVSFAKSSFSLLEDSSKSKLKTPDTPISPRLDGESKASLKLQARRKLVLAKPSDAVQNAFHQTSNKTSHSFTNTHTSSSCVKENKSELLDKLEMMQSDYVQKDQITNRIKQCSNFSSVDEQICTNKLKERTVVSESNNTGTLNNLQIDKCRILEGTKKATVMQASDSLHKNELKCSDKDSKKPSIYEQNTQLISIENYLNKDHDNFKNKNRQDKTKAAHDENEEPVGLDFQSTSQKKPTEDGSMRCERLKNPDVQRAPSLKHTNTWRKHNFRSLDGTSTKAFHPRTGLPLLSSPVPQRKTHSGCFDLDSSLLQLKCLSARSPQQCINRESDPESHGKPFLSSSAPPVTSLSLLGNFEESVLNFRLDPLGIVEGFTAEVGASGVFCPTHMTLPVEVSFYSVSDDNAPSPYMGVITLESLGKRGYRVPPSGTIQVTLFNPNKTVVKMFVVIYDLREMPANHQTFLRQRTFSVPVRREIKRTVNKENSQQTEERLLRYLIHLRFQSSKSGKIYLHRDVRLLFSRKSMEVDSGAAYELKSYTESPTNPQFSPRC.

Residues 29-37 (ALLITEGRT) form a transactivation domain 1 (TAD1) region. 3 disordered regions span residues 396–479 (AGRP…GNPL), 558–579 (SSKS…GESK), and 746–788 (HDNF…GSMR). Positions 746-763 (HDNFKNKNRQDKTKAAHD) are enriched in basic and acidic residues. A required for macropage invasion region spans residues 895 to 952 (LLGNFEESVLNFRLDPLGIVEGFTAEVGASGVFCPTHMTLPVEVSFYSVSDDNAPSPY). The segment at 979–987 (FNPNKTVVK) is transactivation domain 2 (TAD2).

The protein belongs to the ATOS family.

The protein localises to the nucleus. Transcription regulator that syncronizes transcriptional and translational programs to promote macrophage invasion of tissues. The polypeptide is Atos homolog protein A (ATOSA) (Gallus gallus (Chicken)).